Consider the following 560-residue polypeptide: Solute carrier family 22 member 6 (560 aa).

Residues 1–15 (MAFSDLLEQVGSTGR) are Cytoplasmic-facing. Residues 16–36 (FQVLHVTLLSMPILMMASHNL) form a helical membrane-spanning segment. Residues 37–143 (LQNFVAAVPP…LVCDYRALKQ (107 aa)) are Extracellular-facing. A helical membrane pass occupies residues 144-164 (MSQTTYMGGVLVGAIVFGGLS). Topologically, residues 165-170 (DRFGRR) are cytoplasmic. A helical membrane pass occupies residues 171–191 (VLLLISNLMMAIGGTCVAFST). The Extracellular portion of the chain corresponds to 192 to 201 (SFTMFCVFRV). The helical transmembrane segment at 202-222 (CCGMALSGLVLNSFSLIVEWI) threads the bilayer. The Cytoplasmic portion of the chain corresponds to 223–228 (PTRVRT). Residues 229 to 249 (VVGTGTGYCYTTGQLILAAVA) traverse the membrane as a helical segment. Over 250-256 (YCIRDWR) the chain is Extracellular. A helical transmembrane segment spans residues 257–277 (WLTLAVSLPFYVSFLYSWWFL). The Cytoplasmic portion of the chain corresponds to 278–345 (ESARWLVLTK…DLLRTSTMRT (68 aa)). Residues 346–366 (ITICLSAVWFSTSFAYYGLSM) form a helical membrane-spanning segment. Residues 367-374 (DLQKFGVS) lie on the Extracellular side of the membrane. A helical membrane pass occupies residues 375 to 395 (IYLIQIIFGAVDIPAKIIVTI). At 396 to 406 (CMSMLGRRPSQ) the chain is on the cytoplasmic side. The chain crosses the membrane as a helical span at residues 407 to 427 (CGALVLAGIMILINLLVPSDL). The Extracellular portion of the chain corresponds to 428-433 (QMLRTS). A helical membrane pass occupies residues 434–454 (LAVIGKGCLAASFNCCYLYAG). Residues 455–465 (ELYPTVIRQSG) lie on the Cytoplasmic side of the membrane. The helical transmembrane segment at 466-486 (MGWVSMMARFGAMVAPMVLLL) threads the bilayer. The Extracellular portion of the chain corresponds to 487–491 (GDDYP). A helical transmembrane segment spans residues 492-512 (WIPGFIYGGAPIVSGIFAFFL). The Cytoplasmic portion of the chain corresponds to 513–560 (PETLSQPLPDTIQDIDDRGLARTNSKRLPEKLDLAMKDPSCVLLKESV).

The protein belongs to the major facilitator (TC 2.A.1) superfamily. Organic cation transporter (TC 2.A.1.19) family. Glycosylated. Glycosylation is necessary for proper targeting of the transporter to the plasma membrane.

Its subcellular location is the cell membrane. It is found in the basolateral cell membrane. The protein resides in the basal cell membrane. In terms of biological role, involved in the renal elimination of endogenous and exogenous organic anions. Functions as organic anion exchanger when the uptake of one molecule of organic anion is coupled with an efflux of one molecule of endogenous dicarboxylic acid (glutarate, ketoglutarate, etc). Mediates the sodium-independent uptake of p-aminohippurate (PAH), 2,3-dimercapto-1-propanesulfonic acid (DMPS), cidofovir, adefovir, 9-(2-phosphonylmethoxyethyl) guanine (PMEG), 9-(2-phosphonylmethoxyethyl) diaminopurine (PMEDAP), ochratoxin (OTA), acyclovir (ACV), 3'-azido-3-'deoxythymidine (AZT), cimetidine (CMD), 2,4-dichloro-phenoxyacetate (2,4-D), hippurate (HA), indoleacetate (IA), indoxyl sulfate (IS) and 3-carboxy-4-methyl-5-propyl-2-furanpropionate (CMPF) and edaravone sulfate. PAH uptake is inhibited by p-chloromercuribenzenesulphonate (PCMBS), diethyl pyrocarbonate (DEPC), indomethacin, sulindac, diclofenac, carprofen, okadaic acid, benzothiazolylcysteine (BTC), S-chlorotrifluoroethylcysteine (CTFC), cysteine S-conjugates S-dichlorovinylcysteine (DCVC), furosemide, steviol, phorbol 12-myristate 13-acetate (PMA), calcium ionophore A23187, benzylpenicillin, bumetamide, losartan, probenecid, phenol red, urate, glutarate and alpha-ketoglutarate. The sequence is that of Solute carrier family 22 member 6 (slc22a6) from Danio rerio (Zebrafish).